The following is a 208-amino-acid chain: Urease accessory protein UreG 1 (208 aa).

Position 14 to 21 (Gly14 to Thr21) interacts with GTP.

Belongs to the SIMIBI class G3E GTPase family. UreG subfamily. In terms of assembly, homodimer. UreD, UreF and UreG form a complex that acts as a GTP-hydrolysis-dependent molecular chaperone, activating the urease apoprotein by helping to assemble the nickel containing metallocenter of UreC. The UreE protein probably delivers the nickel.

It localises to the cytoplasm. In terms of biological role, facilitates the functional incorporation of the urease nickel metallocenter. This process requires GTP hydrolysis, probably effectuated by UreG. This chain is Urease accessory protein UreG 1, found in Brucella ovis (strain ATCC 25840 / 63/290 / NCTC 10512).